A 273-amino-acid polypeptide reads, in one-letter code: Type II iodothyronine deiodinase (273 aa).

Residues 1–9 (MGILSVDLL) lie on the Lumenal side of the membrane. Residues 10-34 (ITLQILPVFFSNCLFLALYDSVILL) traverse the membrane as a helical; Signal-anchor for type III membrane protein segment. At 35–273 (KHVVLLLSRS…KRUKKTRLAG (239 aa)) the chain is on the cytoplasmic side. Sec-133 is a catalytic residue. 2 non-standard amino acids (selenocysteine) are found at residues Sec-133 and Sec-266.

This sequence belongs to the iodothyronine deiodinase family. In terms of assembly, predominantly monomer. Can form homodimers but homodimerization is not essential for enzyme activity. Interacts with USP20 and USP33. Interacts with MARCHF6. In terms of processing, ubiquitinated by MARCHF6, leading to its degradation by the proteasome. Deubiquitinated by USP20 and USP33. In terms of tissue distribution, isoform 1 is expressed in the lung, trachea, kidney, heart, skeletal muscle, placenta, fetal brain and several regions of the adult brain. Isoform 2 is expressed in the brain, heart, kidney and trachea.

Its subcellular location is the endoplasmic reticulum membrane. The catalysed reaction is 3,3',5-triiodo-L-thyronine + iodide + A + H(+) = L-thyroxine + AH2. The enzyme catalyses 3,3'-diiodo-L-thyronine + iodide + A + H(+) = 3,3',5'-triiodo-L-thyronine + AH2. It carries out the reaction 3'-iodo-L-thyronine + iodide + A + H(+) = 3',5'-diiodo-L-thyronine + AH2. It catalyses the reaction 3,3'-diiodothyronamine + iodide + A + H(+) = 3,3',5'-triiodothyronamine + AH2. The catalysed reaction is 3'-iodothyronamine + iodide + A + H(+) = 3',5'-diiodothyronamine + AH2. In terms of biological role, plays a crucial role in the metabolism of thyroid hormones (TH) and has specific roles in TH activation and inactivation by deiodination. Catalyzes the deiodination of L-thyroxine (T4) to 3,5,3'-triiodothyronine (T3), 3,3',5'-triiodothyronine (rT3) to 3,3'-diiodothyronine (3,3'-T2) and 3',5'-diiodothyronine (3',5'-T2) to 3'-monoiodothyronine (3'-T1) via outer-ring deiodination (ORD). Catalyzes the phenolic ring deiodinations of 3,3',5'-triiodothyronamine and 3',5'- diiodothyronamine. The sequence is that of Type II iodothyronine deiodinase (DIO2) from Homo sapiens (Human).